The chain runs to 158 residues: NADH-quinone oxidoreductase subunit B (158 aa).

Residues cysteine 37, cysteine 38, cysteine 102, and cysteine 132 each contribute to the [4Fe-4S] cluster site.

This sequence belongs to the complex I 20 kDa subunit family. NDH-1 is composed of 14 different subunits. Subunits NuoB, C, D, E, F, and G constitute the peripheral sector of the complex. It depends on [4Fe-4S] cluster as a cofactor.

It localises to the cell inner membrane. It catalyses the reaction a quinone + NADH + 5 H(+)(in) = a quinol + NAD(+) + 4 H(+)(out). In terms of biological role, NDH-1 shuttles electrons from NADH, via FMN and iron-sulfur (Fe-S) centers, to quinones in the respiratory chain. Couples the redox reaction to proton translocation (for every two electrons transferred, four hydrogen ions are translocated across the cytoplasmic membrane), and thus conserves the redox energy in a proton gradient. The sequence is that of NADH-quinone oxidoreductase subunit B from Leptothrix cholodnii (strain ATCC 51168 / LMG 8142 / SP-6) (Leptothrix discophora (strain SP-6)).